The sequence spans 264 residues: Thymidylate synthase (264 aa).

DUMP is bound at residue R21. A (6R)-5,10-methylene-5,6,7,8-tetrahydrofolate-binding site is contributed by H51. 126–127 is a dUMP binding site; that stretch reads RR. C146 (nucleophile) is an active-site residue. Residues 166–169, N177, and 207–209 contribute to the dUMP site; these read RSAD and HIY. D169 serves as a coordination point for (6R)-5,10-methylene-5,6,7,8-tetrahydrofolate. A263 serves as a coordination point for (6R)-5,10-methylene-5,6,7,8-tetrahydrofolate.

Belongs to the thymidylate synthase family. Bacterial-type ThyA subfamily. As to quaternary structure, homodimer.

Its subcellular location is the cytoplasm. It catalyses the reaction dUMP + (6R)-5,10-methylene-5,6,7,8-tetrahydrofolate = 7,8-dihydrofolate + dTMP. Its pathway is pyrimidine metabolism; dTTP biosynthesis. In terms of biological role, catalyzes the reductive methylation of 2'-deoxyuridine-5'-monophosphate (dUMP) to 2'-deoxythymidine-5'-monophosphate (dTMP) while utilizing 5,10-methylenetetrahydrofolate (mTHF) as the methyl donor and reductant in the reaction, yielding dihydrofolate (DHF) as a by-product. This enzymatic reaction provides an intracellular de novo source of dTMP, an essential precursor for DNA biosynthesis. In Rhizobium meliloti (strain 1021) (Ensifer meliloti), this protein is Thymidylate synthase.